The following is a 427-amino-acid chain: UPF0597 protein CPR_0790 (427 aa).

It belongs to the UPF0597 family.

This is UPF0597 protein CPR_0790 from Clostridium perfringens (strain SM101 / Type A).